A 121-amino-acid polypeptide reads, in one-letter code: MIHIITGTLLGLLFLATGARAQFQFFEQMFGGGQQQQESQEHNVPSDSSWYQRTYDNARCSDYLCPGTLACVSVPHHCPCQHPGVEDKFELGDGSAICVSKGGFKPGEAARKVELARKGLL.

The signal sequence occupies residues 1 to 21 (MIHIITGTLLGLLFLATGARA).

This sequence belongs to the LCL2 family.

In terms of biological role, probable component of the endoplasmic reticulum-associated degradation (ERAD) pathway. This Ajellomyces dermatitidis (strain ER-3 / ATCC MYA-2586) (Blastomyces dermatitidis) protein is Long chronological lifespan protein 2 (LCL2).